Consider the following 146-residue polypeptide: Multiple coagulation factor deficiency protein 2 (146 aa).

The first 26 residues, 1 to 26 (MTMRSLLRTPFLCGLLWAFCAPGARA), serve as a signal peptide directing secretion. One can recognise an EF-hand 1 domain in the interval 68–103 (SPQELQLHYFKMHDYDGNNLLDGLELSTAITHVHKE). Ca(2+) is bound by residues aspartate 81, aspartate 83, asparagine 85, and glutamate 92. Position 106 is a phosphoserine (serine 106). Positions 116–146 (ELINIIDGVLRDDDKNNDGYIDYAEFAKSLQ) constitute an EF-hand 2 domain. Ca(2+) contacts are provided by aspartate 129, asparagine 131, aspartate 133, tyrosine 135, and glutamate 140.

As to quaternary structure, interacts in a calcium-dependent manner with LMAN1.

The protein resides in the endoplasmic reticulum-Golgi intermediate compartment. Its subcellular location is the endoplasmic reticulum. It localises to the golgi apparatus. Functionally, the MCFD2-LMAN1 complex forms a specific cargo receptor for the ER-to-Golgi transport of selected proteins. Plays a role in the secretion of coagulation factors. The polypeptide is Multiple coagulation factor deficiency protein 2 (MCFD2) (Homo sapiens (Human)).